The sequence spans 350 residues: Protein RecA (350 aa).

65–72 (GPESSGKT) contributes to the ATP binding site. Positions 326–350 (HNLKTRNTADSKVTGAKDEKSKEEK) are disordered. The span at 340–350 (GAKDEKSKEEK) shows a compositional bias: basic and acidic residues.

This sequence belongs to the RecA family.

Its subcellular location is the cytoplasm. Functionally, can catalyze the hydrolysis of ATP in the presence of single-stranded DNA, the ATP-dependent uptake of single-stranded DNA by duplex DNA, and the ATP-dependent hybridization of homologous single-stranded DNAs. It interacts with LexA causing its activation and leading to its autocatalytic cleavage. The protein is Protein RecA of Clostridium novyi (strain NT).